The following is a 164-amino-acid chain: 17.8 kDa class II heat shock protein (164 aa).

The sHSP domain maps to 48–164; the sequence is DARAMAATPA…KPKTIEVKVA (117 aa).

The protein belongs to the small heat shock protein (HSP20) family.

It is found in the cytoplasm. This is 17.8 kDa class II heat shock protein from Zea mays (Maize).